Consider the following 506-residue polypeptide: Histidine--tRNA ligase, mitochondrial (506 aa).

Residues 1–33 (MPLLGLLPRRAWASLLSQLLRPPCASCTGAVRC) constitute a mitochondrion transit peptide. Serine 67 is subject to Phosphoserine. Residues 131 to 133 (DLT), arginine 158, glutamine 174, aspartate 178, arginine 327, and 331 to 332 (YY) each bind L-histidine. Lysine 444 bears the N6-acetyllysine mark.

The protein belongs to the class-II aminoacyl-tRNA synthetase family. Homodimer. As to expression, a high level expression is seen in the heart, kidney and skeletal muscle while a lower level expression is seen in the brain and liver.

The protein localises to the mitochondrion. The enzyme catalyses tRNA(His) + L-histidine + ATP = L-histidyl-tRNA(His) + AMP + diphosphate + H(+). Mitochondrial aminoacyl-tRNA synthetase that catalyzes the ATP-dependent ligation of histidine to the 3'-end of its cognate tRNA, via the formation of an aminoacyl-adenylate intermediate (His-AMP). In Homo sapiens (Human), this protein is Histidine--tRNA ligase, mitochondrial (HARS2).